A 175-amino-acid polypeptide reads, in one-letter code: Acetyl-CoA decarbonylase/synthase complex subunit epsilon 2 (175 aa).

The protein belongs to the CdhB family. Heterotetramer of two alpha and two epsilon subunits. The ACDS complex is made up of alpha, epsilon, beta, gamma and delta subunits with a probable stoichiometry of (alpha(2)epsilon(2))(4)-beta(8)-(gamma(1)delta(1))(8).

In terms of biological role, part of a complex that catalyzes the reversible cleavage of acetyl-CoA, allowing autotrophic growth from CO(2). The alpha-epsilon subcomponent functions as a carbon monoxide dehydrogenase. The precise role of the epsilon subunit is unclear; it may have a stabilizing role within the alpha(2)epsilon(2) component and/or be involved in electron transfer to FAD during a potential FAD-mediated CO oxidation. This is Acetyl-CoA decarbonylase/synthase complex subunit epsilon 2 (cdhB2) from Archaeoglobus fulgidus (strain ATCC 49558 / DSM 4304 / JCM 9628 / NBRC 100126 / VC-16).